The chain runs to 636 residues: Cysteine-rich receptor-like protein kinase 24 (636 aa).

Residues 1–20 form the signal peptide; the sequence is MVKFLVIFWFVVISFSHVSA. Gnk2-homologous domains follow at residues 21-124 and 130-235; these read QVCL…NRSF and MEIL…LYPF. Residues 21–254 are Extracellular-facing; the sequence is QVCLERSGFF…RQKDGKSIST (234 aa). N-linked (GlcNAc...) asparagine glycosylation is found at Asn33, Asn50, Asn98, Asn101, Asn121, Asn137, Asn145, and Asn197. Residues 255–275 form a helical membrane-spanning segment; it reads GAIVAIIVVPILLLALGVGLW. The Cytoplasmic segment spans residues 276 to 636; that stretch reads KRRKAYKTKT…SVSVTCVSPR (361 aa). The 274-residue stretch at 312–585 folds into the Protein kinase domain; sequence FHNVNKLGHG…TMSTVFHMLT (274 aa). ATP-binding positions include 318–326 and Lys340; that span reads LGHGGFGEV. The active-site Proton acceptor is Asp437.

It belongs to the protein kinase superfamily. Ser/Thr protein kinase family. CRK subfamily.

The protein resides in the membrane. It catalyses the reaction L-seryl-[protein] + ATP = O-phospho-L-seryl-[protein] + ADP + H(+). The catalysed reaction is L-threonyl-[protein] + ATP = O-phospho-L-threonyl-[protein] + ADP + H(+). The protein is Cysteine-rich receptor-like protein kinase 24 (CRK24) of Arabidopsis thaliana (Mouse-ear cress).